Here is a 147-residue protein sequence, read N- to C-terminus: 3-hydroxyacyl-[acyl-carrier-protein] dehydratase FabZ (147 aa).

His-53 is an active-site residue.

It belongs to the thioester dehydratase family. FabZ subfamily.

The protein localises to the cytoplasm. The catalysed reaction is a (3R)-hydroxyacyl-[ACP] = a (2E)-enoyl-[ACP] + H2O. Functionally, involved in unsaturated fatty acids biosynthesis. Catalyzes the dehydration of short chain beta-hydroxyacyl-ACPs and long chain saturated and unsaturated beta-hydroxyacyl-ACPs. This Synechococcus sp. (strain WH7803) protein is 3-hydroxyacyl-[acyl-carrier-protein] dehydratase FabZ.